Here is a 1095-residue protein sequence, read N- to C-terminus: DNA polymerase delta catalytic subunit (1095 aa).

Over residues 1 to 11 (MNRSGISKKRP) the composition is skewed to basic residues. Residues 1-37 (MNRSGISKKRPPPSNTPPPAGKHRATGDSTPSPAIGT) form a disordered region. Residues Cys1007, Cys1010, Cys1020, and Cys1023 each contribute to the Zn(2+) site. The segment at 1007-1023 (CVGCKVPISNGTLCASC) adopts a CysA-type zinc-finger fold. The [4Fe-4S] cluster site is built by Cys1052, Cys1055, Cys1065, and Cys1070. The short motif at 1052–1070 (CQECQGSLHQDVLCTSRDC) is the CysB motif element.

This sequence belongs to the DNA polymerase type-B family. In terms of assembly, heterodimer with subunits of 125 kDa and 50 kDa. The 125 kDa subunit contains the polymerase active site and most likely the active site for the 3'-5' exonuclease activity. It depends on [4Fe-4S] cluster as a cofactor.

It is found in the nucleus. It catalyses the reaction DNA(n) + a 2'-deoxyribonucleoside 5'-triphosphate = DNA(n+1) + diphosphate. This polymerase possesses two enzymatic activities: DNA synthesis (polymerase) and an exonucleolytic activity that degrades single-stranded DNA in the 3'- to 5'-direction. The sequence is that of DNA polymerase delta catalytic subunit (POLD1) from Arabidopsis thaliana (Mouse-ear cress).